We begin with the raw amino-acid sequence, 288 residues long: Probable ketoamine kinase VP1481 (288 aa).

92–94 (NYL) is an ATP binding site. D195 functions as the Proton acceptor in the catalytic mechanism.

It belongs to the fructosamine kinase family.

Ketoamine kinase that phosphorylates ketoamines on the third carbon of the sugar moiety to generate ketoamine 3-phosphate. The protein is Probable ketoamine kinase VP1481 of Vibrio parahaemolyticus serotype O3:K6 (strain RIMD 2210633).